A 283-amino-acid chain; its full sequence is Circadian clock oscillator protein KaiA (283 aa).

Positions 3–133 (QSTALTICGL…VKLCPGCAVP (131 aa)) are psR domain, binds oxidized quinones. Residues 3–163 (QSTALTICGL…RLSQKLKERL (161 aa)) enclose the KaiA N-terminal domain. The interval 164–172 (GYLGVYYKR) is flexible linker. The region spanning 173-281 (DTAFFFRRMS…CEMYRRSIPR (109 aa)) is the KaiA C-terminal domain.

As to quaternary structure, homodimer. The KaiABC complex composition changes during the circadian cycle to control KaiC phosphorylation. Complexes KaiC(6), KaiA(2-4):KaiC(6), KaiB(6):KaiC(6) and KaiC(6):KaiB(6):KaiA(12) are among the most important forms, many form cooperatively. KaiA and CikA bind to the same region of the KaiB(fs) form and therefore compete.

Functionally, key component of the KaiABC oscillator complex, which constitutes the main circadian regulator in cyanobacteria. Complex composition changes during the circadian cycle to control KaiC phosphorylation. KaiA stimulates KaiC autophosphorylation, while KaiB sequesters KaiA, leading to KaiC autodephosphorylation. KaiA binding to the KaiC CII domain during the subjective day yields KaiA(2-4):KaiC(6) complexes which stimulate KaiC autophosphorylation. Phospho-Ser-431 KaiC accumulation triggers binding of KaiB during the subjective night to form the KaiB(6):KaiC(6) complex, leading to changes in the output regulators CikA and SasA. KaiB(6):KaiC(6) formation exposes a site for KaiA binding on KaiB that sequesters KaiA from KaiC's CII domain, making the KaiC(6):KaiB(6):KaiA(12) complex resulting in KaiC autodephosphorylation. Complete dephosphorylation of KaiC leads to dissociation of KaiA(2):KaiB(1), completing 1 cycle of the Kai oscillator. Its function is as follows. Binds oxidized quinones via the N-terminal PsR domain, allowing it to sense redox changes and possibly mediate clock input. This is Circadian clock oscillator protein KaiA from Thermostichus vulcanus (Synechococcus vulcanus).